Consider the following 264-residue polypeptide: Thymidylate synthase (264 aa).

DUMP is bound at residue R21. H51 lines the (6R)-5,10-methylene-5,6,7,8-tetrahydrofolate pocket. DUMP is bound at residue 126 to 127 (RR). Catalysis depends on C146, which acts as the Nucleophile. Residues 166 to 169 (RSAD), N177, and 207 to 209 (HLY) each bind dUMP. D169 contributes to the (6R)-5,10-methylene-5,6,7,8-tetrahydrofolate binding site. A263 is a (6R)-5,10-methylene-5,6,7,8-tetrahydrofolate binding site.

It belongs to the thymidylate synthase family. Bacterial-type ThyA subfamily. As to quaternary structure, homodimer.

It is found in the cytoplasm. The catalysed reaction is dUMP + (6R)-5,10-methylene-5,6,7,8-tetrahydrofolate = 7,8-dihydrofolate + dTMP. Its pathway is pyrimidine metabolism; dTTP biosynthesis. Its function is as follows. Catalyzes the reductive methylation of 2'-deoxyuridine-5'-monophosphate (dUMP) to 2'-deoxythymidine-5'-monophosphate (dTMP) while utilizing 5,10-methylenetetrahydrofolate (mTHF) as the methyl donor and reductant in the reaction, yielding dihydrofolate (DHF) as a by-product. This enzymatic reaction provides an intracellular de novo source of dTMP, an essential precursor for DNA biosynthesis. This Chromobacterium violaceum (strain ATCC 12472 / DSM 30191 / JCM 1249 / CCUG 213 / NBRC 12614 / NCIMB 9131 / NCTC 9757 / MK) protein is Thymidylate synthase.